Reading from the N-terminus, the 266-residue chain is UPF0294 protein YafD (266 aa).

The protein belongs to the UPF0294 family.

It is found in the cytoplasm. The polypeptide is UPF0294 protein YafD (Salmonella typhi).